A 112-amino-acid chain; its full sequence is Cytochrome c (112 aa).

Heme c contacts are provided by C23, C26, and H27. K81 is subject to N6,N6,N6-trimethyllysine. M89 contributes to the heme c binding site. N6,N6,N6-trimethyllysine is present on K95.

This sequence belongs to the cytochrome c family. In terms of processing, binds 1 heme c group covalently per subunit.

Its subcellular location is the mitochondrion intermembrane space. Its function is as follows. Electron carrier protein. The oxidized form of the cytochrome c heme group can accept an electron from the heme group of the cytochrome c1 subunit of cytochrome reductase. Cytochrome c then transfers this electron to the cytochrome oxidase complex, the final protein carrier in the mitochondrial electron-transport chain. The polypeptide is Cytochrome c (CC-1) (Arabidopsis thaliana (Mouse-ear cress)).